Here is a 251-residue protein sequence, read N- to C-terminus: MGAPRTCLIFITIQLVSLAYAQEVSKRVPQGFLGMRGKKYFDEEGIEQFYKRKPQFFVGVKGKKSLQDILEAPEEYYKRAPMGFMGMRGKKDLGDSQSTELFPKRDGSLIGKIDYSSKEENADPDFPILNELLLQYLSQLDAPRNTYMQSSESMEPEQSNDLDKRAANFNQFYGVRGKKSINNKRPYDLTFRGKFIGVRGKKDLKNSNAHEIKFLVDQNGPLPKRKAQMGFFGMRGKKWTDEPSLEMDMPN.

A signal peptide spans 1 to 21 (MGAPRTCLIFITIQLVSLAYA). The propeptide occupies 22–25 (QEVS). Arginine 36 is modified (arginine amide). The propeptide occupies 39–50 (KYFDEEGIEQFY). Lysine amide is present on lysine 61. The propeptide occupies 65-163 (SLQDILEAPE…MEPEQSNDLD (99 aa)). Arginine 176 carries the arginine amide modification. Positions 180–183 (SINN) are excised as a propeptide. The residue at position 199 (arginine 199) is an Arginine amide. Positions 203–223 (DLKNSNAHEIKFLVDQNGPLP) are excised as a propeptide. Arginine amide is present on arginine 235. The propeptide occupies 239-251 (WTDEPSLEMDMPN).

This sequence belongs to the tachykinin family. As to expression, tachykinin-related peptide 1: Expressed in antennal lobe (AL) and gnathal ganglion (GNG) (at protein level). Expression in AL detected in all animals, in GNG in most animals (at protein level). Not expressed in corpora cardiaca (CC) and corpora allata (CA) (at protein level). Tachykinin-related peptide 2: Expressed in antennal lobe (AL) corpora cardiaca (CC) and corpora allata (CA) with expression detected in few animals (at protein level). Not expressed in gnathal ganglion (GNG) (at protein level). Tachykinin-related peptide 4: Expressed in corpora cardiaca (CC), corpora allata (CA), antennal lobe (AL) and gnathal ganglion (GNG) (at protein level). Expression in AL and GNG detected in most animals, in CC and CA detected in few animals (at protein level). Tachykinin-related peptide 5: Expressed in corpora cardiaca (CC), corpora allata (CA), antennal lobe (AL) and gnathal ganglion (GNG) (at protein level). Expression in CC and CA detected in some animals, in AL and GNG in few animals (at protein level). Tachykinin-related peptide 6: Expressed in antennal lobe (AL) and gnathal ganglion (GNG) (at protein level). Expression in AL detected in all animals, in GNG in some animals (at protein level). Not expressed in corpora cardiaca (CC) and corpora allata (CA) (at protein level).

It is found in the secreted. In terms of biological role, tachykinins are active peptides which excite neurons, evoke behavioral responses, are potent vasodilators and secretagogues, and contract (directly or indirectly) many smooth muscles. The sequence is that of Tachykinins from Agrotis ipsilon (Black cutworm moth).